Here is a 506-residue protein sequence, read N- to C-terminus: Probable E3 ubiquitin-protein ligase ARI14 (506 aa).

Positions 79–308 (PDSSSEISLE…VDSGFCIKTE (230 aa)) are TRIAD supradomain. The segment at 83-140 (SEISLETDVYEFDGDNDLISMPFCSHKFDSKYWREYLEKNFYYVEKIQTTISCPDQDC) adopts an RING-type 1 zinc-finger fold. Zn(2+)-binding residues include C106, H108, C135, C140, C180, C185, C207, C209, C214, C217, H222, C227, C258, C261, C277, C279, C284, C287, H294, and C304. An IBR-type zinc finger spans residues 158–227 (EMYERYIWRS…RLESHRPVSC (70 aa)). An RING-type 2; atypical zinc finger spans residues 258 to 287 (CPHCLCSLESDTKMPQFLTCVCRLRFCSRC). A RanBP2-type zinc finger spans residues 462–492 (GTGPFWYCDRCTYANTWEDNECEMCYDDSAS).

It belongs to the RBR family. Ariadne subfamily. It depends on Zn(2+) as a cofactor. Mostly expressed in closed flowers and, to a lower extent, in pollen.

The catalysed reaction is [E2 ubiquitin-conjugating enzyme]-S-ubiquitinyl-L-cysteine + [acceptor protein]-L-lysine = [E2 ubiquitin-conjugating enzyme]-L-cysteine + [acceptor protein]-N(6)-ubiquitinyl-L-lysine.. The protein operates within protein modification; protein ubiquitination. Functionally, might act as an E3 ubiquitin-protein ligase, or as part of E3 complex, which accepts ubiquitin from specific E2 ubiquitin-conjugating enzymes and then transfers it to substrates. Negatively regulates male gametophyte formation and double fertilization. The chain is Probable E3 ubiquitin-protein ligase ARI14 from Arabidopsis thaliana (Mouse-ear cress).